A 390-amino-acid chain; its full sequence is uncharacterized protein (390 aa).

Positions 215-325 (SRFKRKTLGK…KLIKDCEMVE (111 aa)) constitute a Glutaredoxin domain.

This is an uncharacterized protein from Arabidopsis thaliana (Mouse-ear cress).